We begin with the raw amino-acid sequence, 215 residues long: MVKSTTVTRLDGLPLAASVDDESTERNLESHKKQAKLILKRLSPTSEKRASIESGDYTFHYLIDNGICYLCICEQSYPRKLAFSYLEELAGEFWNSFGEEALQPGLRPYAFVQFDTFMQKSKRVYNTPRANDNLDKLNTELKDVTRVMTKNIEDLLYRGDSLEKMADLSSDLRYSSAKYKKAARRVNLEALWRQYGPVSIIALLFLIFVYWRFFA.

Residues 1 to 194 (MVKSTTVTRL…RVNLEALWRQ (194 aa)) are Cytoplasmic-facing. Positions 9 to 118 (RLDGLPLAAS…YAFVQFDTFM (110 aa)) constitute a Longin domain. In terms of domain architecture, v-SNARE coiled-coil homology spans 133–193 (NLDKLNTELK…RRVNLEALWR (61 aa)). The chain crosses the membrane as a helical; Anchor for type IV membrane protein span at residues 195 to 215 (YGPVSIIALLFLIFVYWRFFA).

This sequence belongs to the synaptobrevin family. Component of two distinct SNARE complexes consisting of sed5, bos1, bet1 and sec22 or ufe1, use1, sec20 and sec22. Ykt6 can probably replace sec22 as subunit of either complex.

The protein resides in the membrane. Its subcellular location is the endoplasmic reticulum membrane. It is found in the golgi apparatus membrane. Nonessential SNARE involved in targeting and fusion of ER-derived transport vesicles with the Golgi complex as well as Golgi-derived retrograde transport vesicles with the ER. This Schizosaccharomyces pombe (strain 972 / ATCC 24843) (Fission yeast) protein is Protein transport protein sec22 (sec22).